Here is a 485-residue protein sequence, read N- to C-terminus: N-succinylglutamate 5-semialdehyde dehydrogenase (485 aa).

220–225 contacts NAD(+); sequence GSANTG. Catalysis depends on residues E243 and C278.

Belongs to the aldehyde dehydrogenase family. AstD subfamily.

It carries out the reaction N-succinyl-L-glutamate 5-semialdehyde + NAD(+) + H2O = N-succinyl-L-glutamate + NADH + 2 H(+). Its pathway is amino-acid degradation; L-arginine degradation via AST pathway; L-glutamate and succinate from L-arginine: step 4/5. Catalyzes the NAD-dependent reduction of succinylglutamate semialdehyde into succinylglutamate. This chain is N-succinylglutamate 5-semialdehyde dehydrogenase, found in Aliivibrio fischeri (strain ATCC 700601 / ES114) (Vibrio fischeri).